We begin with the raw amino-acid sequence, 148 residues long: Cell division protein SepF (148 aa).

This sequence belongs to the SepF family. In terms of assembly, homodimer. Interacts with FtsZ.

Its subcellular location is the cytoplasm. Functionally, cell division protein that is part of the divisome complex and is recruited early to the Z-ring. Probably stimulates Z-ring formation, perhaps through the cross-linking of FtsZ protofilaments. Its function overlaps with FtsA. The polypeptide is Cell division protein SepF (Alkaliphilus metalliredigens (strain QYMF)).